We begin with the raw amino-acid sequence, 132 residues long: MWDLFYFKVFFWVVLISLCIFMVHRNGKVANKFRELRSRFQSRFNRHISLNDSFTDDLESGLHSSNFDIISENNNDTRGGLDDISKNEIKQIMEMNNISFDKARLLYMERKFGQNGIAPDGTPIDPKAFTFD.

The first 25 residues, 1 to 25 (MWDLFYFKVFFWVVLISLCIFMVHR), serve as a signal peptide directing secretion.

Belongs to the UPF0357 family.

The protein is UPF0357 protein YCL012C (YCL012C) of Saccharomyces bayanus (Yeast).